A 79-amino-acid polypeptide reads, in one-letter code: Exodeoxyribonuclease 7 small subunit (79 aa).

This sequence belongs to the XseB family. In terms of assembly, heterooligomer composed of large and small subunits.

Its subcellular location is the cytoplasm. It carries out the reaction Exonucleolytic cleavage in either 5'- to 3'- or 3'- to 5'-direction to yield nucleoside 5'-phosphates.. Bidirectionally degrades single-stranded DNA into large acid-insoluble oligonucleotides, which are then degraded further into small acid-soluble oligonucleotides. This chain is Exodeoxyribonuclease 7 small subunit, found in Lactococcus lactis subsp. lactis (strain IL1403) (Streptococcus lactis).